The primary structure comprises 825 residues: MWLQPSLSLSPTPTVGRSLCLTLGFLSLVLRASTQAPAPTVNTHFGKLRGARVPLPSEILGPVDQYLGVPYAAPPIGEKRFLPPEPPPSWSGIRNATHFPPVCPQNIHTAVPEVMLPVWFTANLDIVATYIQEPNEDCLYLNVYVPTEDGSGAKKQGEDLADNDGDEDEDIRDSGAKPVMVYIHGGSYMEGTGNMIDGSVLASYGNVIVITLNYRVGVLGFLSTGDQAAKGNYGLLDQIQALRWVSENIAFFGGDPRRITVFGSGIGASCVSLLTLSHHSEGLFQRAIIQSGSALSSWAVNYQPVKYTSLLADKVGCNVLDTVDMVDCLRQKSAKELVEQDIQPARYHVAFGPVIDGDVIPDDPEILMEQGEFLNYDIMLGVNQGEGLKFVEGVVDPEDGVSGTDFDYSVSNFVDNLYGYPEGKDTLRETIKFMYTDWADRDNPETRRKTLVALFTDHQWVEPSVVTADLHARYGSPTYFYAFYHHCQSLMKPAWSDAAHGDEVPYVFGVPMVGPTDLFPCNFSKNDVMLSAVVMTYWTNFAKTGDPNKPVPQDTKFIHTKANRFEEVAWSKYNPRDQLYLHIGLKPRVRDHYRATKVAFWKHLVPHLYNLHDMFHYTSTTTKVPPPDTTHSSHITRRPNGKTWSTKRPAISPAYSNENAPGSWNGDQDAGPLLVENPRDYSTELSVTIAVGASLLFLNVLAFAALYYRKDKRRQEPLRQPSPQRGTGAPELGTAPEEELAALQLGPTHHECEAGPPHDTLRLTALPDYTLTLRRSPDDIPLMTPNTITMIPNSLVGLQTLHPYNTFAAGFNSTGLPHSHSTTRV.

An N-terminal signal peptide occupies residues methionine 1–threonine 34. Residues glutamine 35–serine 686 lie on the Extracellular side of the membrane. N-linked (GlcNAc...) asparagine glycosylation occurs at asparagine 95. Cysteine 103 and cysteine 138 are joined by a disulfide. Residues serine 151–arginine 172 are disordered. Residues aspartate 159–isoleucine 171 show a composition bias toward acidic residues. 2 disulfide bridges follow: cysteine 317–cysteine 328 and cysteine 487–cysteine 521. An N-linked (GlcNAc...) asparagine glycan is attached at asparagine 522. Polar residues-rich tracts occupy residues threonine 622–serine 633 and alanine 654–glycine 666. Residues threonine 622–glutamine 668 form a disordered region. A helical membrane pass occupies residues valine 687 to tyrosine 707. Over tyrosine 708–valine 825 the chain is Cytoplasmic. Serine 722 bears the Phosphoserine mark. Tyrosine 769 is subject to Phosphotyrosine.

This sequence belongs to the type-B carboxylesterase/lipase family. In terms of assembly, homodimer, and heterodimer with NLGN1 and NLGN2. Interacts with neurexins NRXN1, NRXN2 and NRXN3. Interaction with neurexins is mediated by heparan sulfate glycan modification on neurexin. Interacts (via its C-terminus) with DLG4/PSD-95 (via PDZ domain 3). In terms of tissue distribution, brain and arteries (at protein level). Detected in heart, brain, spleen, lung, liver, skeletal muscle, kidney and testis. Expressed in olfactory bulb and olfactory epithelium. Found in olfactory ensheathing glia but not in olfactory neurons, and in developing peripheral glia.

The protein resides in the cell membrane. Its subcellular location is the synapse. Cell surface protein involved in cell-cell-interactions via its interactions with neurexin family members. Plays a role in synapse function and synaptic signal transmission, and probably mediates its effects by recruiting and clustering other synaptic proteins. May promote the initial formation of synapses, but is not essential for this. May also play a role in glia-glia or glia-neuron interactions in the developing peripheral nervous system. The protein is Neuroligin-3 (Nlgn3) of Mus musculus (Mouse).